The chain runs to 597 residues: Arginine--tRNA ligase (597 aa).

A 'HIGH' region motif is present at residues 125 to 135; it reads PNTNKPLHLGH.

Belongs to the class-I aminoacyl-tRNA synthetase family. Monomer.

It is found in the cytoplasm. It catalyses the reaction tRNA(Arg) + L-arginine + ATP = L-arginyl-tRNA(Arg) + AMP + diphosphate. The chain is Arginine--tRNA ligase from Bacteroides fragilis (strain ATCC 25285 / DSM 2151 / CCUG 4856 / JCM 11019 / LMG 10263 / NCTC 9343 / Onslow / VPI 2553 / EN-2).